A 161-amino-acid chain; its full sequence is Ethylene-responsive transcription factor ERF070 (161 aa).

Positions 1 to 35 are disordered; sequence MKRIIRISFTDAEATDSSSDEDTEERGGASQTRRR. Residues 78–140 constitute a DNA-binding region (AP2/ERF); it reads KYRGVRQRPW…IGPHAPTNFG (63 aa).

It belongs to the AP2/ERF transcription factor family. ERF subfamily.

The protein resides in the nucleus. Probably acts as a transcriptional activator. Binds to the GCC-box pathogenesis-related promoter element. May be involved in the regulation of gene expression by stress factors and by components of stress signal transduction pathways. The chain is Ethylene-responsive transcription factor ERF070 (ERF070) from Arabidopsis thaliana (Mouse-ear cress).